The sequence spans 693 residues: Elongation factor G (693 aa).

Positions N8–L283 constitute a tr-type G domain. Residues A17–T24, D81–H85, and N135–D138 each bind GTP.

This sequence belongs to the TRAFAC class translation factor GTPase superfamily. Classic translation factor GTPase family. EF-G/EF-2 subfamily.

It localises to the cytoplasm. Its function is as follows. Catalyzes the GTP-dependent ribosomal translocation step during translation elongation. During this step, the ribosome changes from the pre-translocational (PRE) to the post-translocational (POST) state as the newly formed A-site-bound peptidyl-tRNA and P-site-bound deacylated tRNA move to the P and E sites, respectively. Catalyzes the coordinated movement of the two tRNA molecules, the mRNA and conformational changes in the ribosome. This Endomicrobium trichonymphae protein is Elongation factor G.